Here is a 121-residue protein sequence, read N- to C-terminus: Small ribosomal subunit protein uS13 (121 aa).

The segment at 91 to 121 (HRRGLPVRGQNSKNNARTRKGPRRTVANKKK) is disordered. Over residues 106–121 (ARTRKGPRRTVANKKK) the composition is skewed to basic residues.

Belongs to the universal ribosomal protein uS13 family. Part of the 30S ribosomal subunit. Forms a loose heterodimer with protein S19. Forms two bridges to the 50S subunit in the 70S ribosome.

Functionally, located at the top of the head of the 30S subunit, it contacts several helices of the 16S rRNA. In the 70S ribosome it contacts the 23S rRNA (bridge B1a) and protein L5 of the 50S subunit (bridge B1b), connecting the 2 subunits; these bridges are implicated in subunit movement. Contacts the tRNAs in the A and P-sites. In Bacillus cereus (strain ZK / E33L), this protein is Small ribosomal subunit protein uS13.